The following is a 310-amino-acid chain: D-erythrulose 1-phosphate 3-epimerase (310 aa).

The catalysed reaction is D-erythrulose 1-phosphate = L-erythrulose 1-phosphate. Its pathway is carbohydrate metabolism; erythritol degradation. Its function is as follows. Catalyzes the racemization of D-erythrulose 1-phosphate to L-erythrulose 1-phosphate. This chain is D-erythrulose 1-phosphate 3-epimerase, found in Brucella abortus (strain 2308).